We begin with the raw amino-acid sequence, 602 residues long: MTDISVSKIRNFCIIAHIDHGKSTLADRLLQDTGTVQQRDMQEQFLDSMDLERERGITIKLQAARMKYKADDSQEYVLNLIDTPGHVDFSYEVSRSLQACEGALLVVDASQGVEAQTLANVYLALENNLEIIPVLNKVDLPGADAEKIKQEIEEIIGLDTSNAINCSAKTGVGIKDILEAIVRRVPPPQDEIKLPTKALIFDSYYDPYRGVIVYFRVISGSLNKREKILLMASKKNYELDEIGIMAPDQQQVDELHAGEVGYLAASIKSVADARVGDTITLLNSPANDPLPGYKTANPMVFCGLFPTDADQFPDLRVSLEKLQLSDAALKYEPETSSAMGFGFRCGFLGLLHMEIVQERLEREYDLDLIVTAPSVIYKVNLNHQEHIFIDNPSTIPDPQLRESIEEPYVKMEIYAPNEFNGTLMGLCQERRGVFIDMKYITTDRVTLIYEIPLAEVVTDFFDQMKSRTQGYASMEYHLMGYRKNDLVRLDVLINSERADPLTSIVHKDKAYGIGRSLVEKLKELIPKQQFKIPIQASIGSRIIASESISALRKDVLSKCYGGDISRKKKLLKKQAKGKKRMKAMGKVEVPQEAFMAVLKLNQ.

A tr-type G domain is found at 7–189 (SKIRNFCIIA…AIVRRVPPPQ (183 aa)). Residues 19-24 (DHGKST) and 136-139 (NKVD) contribute to the GTP site.

This sequence belongs to the TRAFAC class translation factor GTPase superfamily. Classic translation factor GTPase family. LepA subfamily.

It localises to the cell inner membrane. It catalyses the reaction GTP + H2O = GDP + phosphate + H(+). Its function is as follows. Required for accurate and efficient protein synthesis under certain stress conditions. May act as a fidelity factor of the translation reaction, by catalyzing a one-codon backward translocation of tRNAs on improperly translocated ribosomes. Back-translocation proceeds from a post-translocation (POST) complex to a pre-translocation (PRE) complex, thus giving elongation factor G a second chance to translocate the tRNAs correctly. Binds to ribosomes in a GTP-dependent manner. The sequence is that of Elongation factor 4 from Prochlorococcus marinus (strain MIT 9301).